The primary structure comprises 222 residues: N-(5'-phosphoribosyl)anthranilate isomerase (222 aa).

Belongs to the TrpF family.

The enzyme catalyses N-(5-phospho-beta-D-ribosyl)anthranilate = 1-(2-carboxyphenylamino)-1-deoxy-D-ribulose 5-phosphate. It functions in the pathway amino-acid biosynthesis; L-tryptophan biosynthesis; L-tryptophan from chorismate: step 3/5. This is N-(5'-phosphoribosyl)anthranilate isomerase from Rhizobium etli (strain CIAT 652).